The sequence spans 269 residues: UPF0494 membrane protein C1348.01 (269 aa).

Helical transmembrane passes span 107–127 (WPLLIIWSIIIVFAVDKKFEV), 144–164 (IWVPIAIYVCLLVLMLLSLIF), 177–197 (GVIIAVLGMIIAVLGMIIAAL), and 201–221 (ITGLLYFGHWALYKLVILSLG).

Belongs to the UPF0494 family.

The protein resides in the vacuole membrane. The sequence is that of UPF0494 membrane protein C1348.01 from Schizosaccharomyces pombe (strain 972 / ATCC 24843) (Fission yeast).